The chain runs to 320 residues: Zinc finger protein 330 (320 aa).

The segment at 1 to 23 (MPKKKTGARKKAENRREREKQLR) is disordered. The short motif at 3-11 (KKKTGARKK) is the Nuclear localization signal element. Over residues 10–22 (KKAENRREREKQL) the composition is skewed to basic and acidic residues. 4 C4-type zinc fingers span residues 42–58 (CDKC…CYFC), 67–104 (CAQC…CDFC), 129–149 (CVEC…CSFC), and 175–189 (CVSC…CLRC). Disordered regions lie at residues 206–250 (EKGK…ASGY) and 264–303 (GASY…TNLN). Over residues 216–225 (CGHETQETKD) the composition is skewed to basic and acidic residues. Over residues 269–287 (DEEEDEYEAEDDEEEEDEG) the composition is skewed to acidic residues. The residue at position 291 (Ser291) is a Phosphoserine.

The protein belongs to the NOA36 family.

The protein resides in the nucleus. It localises to the nucleolus. The protein localises to the chromosome. It is found in the centromere. In Bos taurus (Bovine), this protein is Zinc finger protein 330 (ZNF330).